The following is a 511-amino-acid chain: Cytochrome P450 monooxygenase PUL2 (511 aa).

A helical membrane pass occupies residues 14–34 (WMAFVYFTPVLFVVLYLLKEW). N-linked (GlcNAc...) asparagine glycosylation is found at Asn-116, Asn-141, and Asn-442. Heme is bound at residue Cys-462.

This sequence belongs to the cytochrome P450 family. The cofactor is heme.

Its subcellular location is the membrane. The protein operates within siderophore biosynthesis. Functionally, cytochrome P450 monooxygenase; part of the PUL gene cluster that mediates the formation of pulcherrimin, a red iron-containing pigment composed of two cyclized and modified leucine molecules that acts as a siderophore, a chelator that binds iron outside the cell for subsequent uptake. Two leucine molecules are cyclized via a cyclodipeptide synthase, and the resulting diketopiperazine is oxidized by a cytochrome P450 monooxygenase to generate pulcherriminic acid (PA), which can then spontaneously bind iron to form pulcherrimin. The probable cyclodipeptide synthase PUL1 and the cytochrome P450 monooxygenase PUL2 encode the enzymes responsible for the two-step pulcherrimin biosynthesis pathway. The protein is Cytochrome P450 monooxygenase PUL2 of Kluyveromyces lactis (strain ATCC 8585 / CBS 2359 / DSM 70799 / NBRC 1267 / NRRL Y-1140 / WM37) (Yeast).